Reading from the N-terminus, the 249-residue chain is tRNA (guanine-N(1)-)-methyltransferase (249 aa).

Residues Gly121 and 141–146 (LGDFVL) contribute to the S-adenosyl-L-methionine site.

It belongs to the RNA methyltransferase TrmD family. In terms of assembly, homodimer.

It is found in the cytoplasm. It catalyses the reaction guanosine(37) in tRNA + S-adenosyl-L-methionine = N(1)-methylguanosine(37) in tRNA + S-adenosyl-L-homocysteine + H(+). Functionally, specifically methylates guanosine-37 in various tRNAs. The chain is tRNA (guanine-N(1)-)-methyltransferase from Cereibacter sphaeroides (strain KD131 / KCTC 12085) (Rhodobacter sphaeroides).